Here is a 616-residue protein sequence, read N- to C-terminus: Chaperone protein HscA (616 aa).

Belongs to the heat shock protein 70 family.

Its function is as follows. Chaperone involved in the maturation of iron-sulfur cluster-containing proteins. Has a low intrinsic ATPase activity which is markedly stimulated by HscB. Involved in the maturation of IscU. In Cronobacter sakazakii (strain ATCC BAA-894) (Enterobacter sakazakii), this protein is Chaperone protein HscA.